Consider the following 403-residue polypeptide: Formate-dependent phosphoribosylglycinamide formyltransferase (403 aa).

N(1)-(5-phospho-beta-D-ribosyl)glycinamide-binding positions include Glu27–Leu28 and Glu87. ATP contacts are provided by residues Arg120, Lys161, Ser166 to Gln171, Glu201 to Val204, and Glu209. The ATP-grasp domain maps to Arg125–Leu319. Mg(2+) is bound by residues Glu278 and Glu290. N(1)-(5-phospho-beta-D-ribosyl)glycinamide contacts are provided by residues Asp297, Lys366, and Arg373 to Arg374. The segment at Gly382–Ala403 is disordered. Basic and acidic residues predominate over residues Glu386 to Ser397.

It belongs to the PurK/PurT family. Homodimer.

It carries out the reaction N(1)-(5-phospho-beta-D-ribosyl)glycinamide + formate + ATP = N(2)-formyl-N(1)-(5-phospho-beta-D-ribosyl)glycinamide + ADP + phosphate + H(+). It functions in the pathway purine metabolism; IMP biosynthesis via de novo pathway; N(2)-formyl-N(1)-(5-phospho-D-ribosyl)glycinamide from N(1)-(5-phospho-D-ribosyl)glycinamide (formate route): step 1/1. Involved in the de novo purine biosynthesis. Catalyzes the transfer of formate to 5-phospho-ribosyl-glycinamide (GAR), producing 5-phospho-ribosyl-N-formylglycinamide (FGAR). Formate is provided by PurU via hydrolysis of 10-formyl-tetrahydrofolate. The polypeptide is Formate-dependent phosphoribosylglycinamide formyltransferase (Rhodococcus jostii (strain RHA1)).